Consider the following 241-residue polypeptide: Bidirectional sugar transporter SWEET17 (241 aa).

At 1-3 (MAE) the chain is on the vacuolar side. The helical transmembrane segment at 4-24 (ASFYIGVIGNVISVLVFLSPV) threads the bilayer. Residues 6–92 (FYIGVIGNVI…SLFLFYAPRH (87 aa)) form the MtN3/slv 1 domain. The Cytoplasmic segment spans residues 25–41 (ETFWKIVKRRSTEEYKS). A helical transmembrane segment spans residues 42 to 62 (LPYICTLLGSSLWTYYGIVTP). Residues 63–69 (GEYLVST) lie on the Vacuolar side of the membrane. The chain crosses the membrane as a helical span at residues 70 to 90 (VNGFGALVETIYVSLFLFYAP). At 91–94 (RHLK) the chain is on the cytoplasmic side. Residues 95–115 (LKTVDVDAMLNVFFPIAAIVA) form a helical membrane-spanning segment. The Vacuolar portion of the chain corresponds to 116 to 128 (TRSAFEDEKMRSQ). A helical membrane pass occupies residues 129–149 (SIGFISAGLNIIMYGSPLSAM). The MtN3/slv 2 domain occupies 129–212 (SIGFISAGLN…LILYGIYRNA (84 aa)). Topologically, residues 150–161 (KTVVTTKSVKYM) are cytoplasmic. Residues 162–182 (PFWLSFFLFLNGAIWAVYALL) traverse the membrane as a helical segment. At 183–185 (QHD) the chain is on the vacuolar side. A helical transmembrane segment spans residues 186–206 (VFLLVPNGVGFVFGTMQLILY). The Cytoplasmic segment spans residues 207 to 241 (GIYRNAKPVGLSNGLSEIAQDEEEGLTSRVEPLLS).

This sequence belongs to the SWEET sugar transporter family. In terms of assembly, forms homooligomers and heterooligomers with SWEET1, SWEET2, SWEET3, SWEET4, SWEET6, SWEET7, SWEET8, SWEET9, SWEET11, SWEET12, SWEET13, SWEET15 and SWEET16. In terms of tissue distribution, expressed in leaves at low levels, mostly in xylem and parenchyma. Highly expressed in the cortex of roots, predominantly in tips and mature regions, especially in tonoplasts. Also accumulates in cotyledons, stems, flowers, and siliques.

It is found in the vacuole membrane. Functionally, acts as a vacuolar hexose transporter. Regulates fructose (Fru) homeostasis in leaves and roots by exporting/importing Fru through the tonoplast regarding metabolic demand. The polypeptide is Bidirectional sugar transporter SWEET17 (Arabidopsis thaliana (Mouse-ear cress)).